The primary structure comprises 59 residues: Conotoxin Sr5.4 (59 aa).

Residues 1–22 (MRCLPVFVILLLLIASAPSVDA) form the signal peptide. Positions 23–44 (QLKTKDDVPLASFHDNAKGTQH) are excised as a propeptide.

Belongs to the conotoxin T superfamily. Contains 2 disulfide bonds that can be either 'C1-C3, C2-C4' or 'C1-C4, C2-C3', since these disulfide connectivities have been observed for conotoxins with cysteine framework V (for examples, see AC P0DQQ7 and AC P81755). As to expression, expressed by the venom duct.

It localises to the secreted. The protein is Conotoxin Sr5.4 of Conus spurius (Alphabet cone).